The following is a 299-amino-acid chain: Cysteine synthase B (299 aa).

Lys-40 is modified (N6-(pyridoxal phosphate)lysine). Pyridoxal 5'-phosphate-binding positions include Asn-70, 174-178, and Ser-261; that span reads GTGGT.

The protein belongs to the cysteine synthase/cystathionine beta-synthase family. Requires pyridoxal 5'-phosphate as cofactor.

It carries out the reaction O-acetyl-L-serine + hydrogen sulfide = L-cysteine + acetate. It functions in the pathway amino-acid biosynthesis; L-cysteine biosynthesis; L-cysteine from L-serine: step 2/2. The protein is Cysteine synthase B (cysM) of Campylobacter jejuni subsp. jejuni serotype O:2 (strain ATCC 700819 / NCTC 11168).